Consider the following 505-residue polypeptide: Maturase K (505 aa).

Belongs to the intron maturase 2 family. MatK subfamily.

It localises to the plastid. Its subcellular location is the chloroplast. In terms of biological role, usually encoded in the trnK tRNA gene intron. Probably assists in splicing its own and other chloroplast group II introns. This Calycanthus floridus (Eastern sweetshrub) protein is Maturase K.